Consider the following 226-residue polypeptide: Apoptosis regulator OPG045 (226 aa).

The protein belongs to the orthopoxvirus OPG045 family. As to quaternary structure, homodimer. Interacts with host pro-apoptotic protein BCL2L11 (via BH3 domain). Interacts with host NLRP1. Interacts with host BAK.

The protein localises to the host mitochondrion outer membrane. It localises to the host cytoplasm. Plays a role in evading host innate immune response by inhibiting host inflammasome activation. Interacts with and inhibits NLR-mediated interleukin-1 beta/IL1B production in infected cells. At the host mitochondria outer membrane, interacts with the BH3 domain of host BAK and prevents BAK from binding active BAX. In turn, host apoptosis is inhibited. The polypeptide is Apoptosis regulator OPG045 (OPG045) (Homo sapiens (Human)).